The following is a 610-amino-acid chain: UvrABC system protein C (610 aa).

The region spanning 16-94 (SQPGVYRMYD…IKLYQPRYNV (79 aa)) is the GIY-YIG domain. The region spanning 204–239 (DQVLTQLIARMEKASQDLAFEEAARIRDQIQAVRRV) is the UVR domain.

It belongs to the UvrC family. As to quaternary structure, interacts with UvrB in an incision complex.

The protein localises to the cytoplasm. Functionally, the UvrABC repair system catalyzes the recognition and processing of DNA lesions. UvrC both incises the 5' and 3' sides of the lesion. The N-terminal half is responsible for the 3' incision and the C-terminal half is responsible for the 5' incision. The polypeptide is UvrABC system protein C (Salmonella enteritidis PT4 (strain P125109)).